An 87-amino-acid polypeptide reads, in one-letter code: UPF0473 protein Dred_0776 (87 aa).

Belongs to the UPF0473 family.

This chain is UPF0473 protein Dred_0776, found in Desulforamulus reducens (strain ATCC BAA-1160 / DSM 100696 / MI-1) (Desulfotomaculum reducens).